The sequence spans 340 residues: Chitinase 2 (340 aa).

Residues 1–32 (MSTPRAAASLAKKAALVALAVLAAALATAARA) form the signal peptide. A Chitin-binding type-1 domain is found at 33–73 (EQCGAQAGGARCPNCLCCSRWGWCGTTSDFCGDGCQSQCSG). 8 disulfide bridges follow: Cys-35/Cys-50, Cys-44/Cys-56, Cys-47/Cys-74, Cys-49/Cys-63, Cys-67/Cys-71, Cys-110/Cys-172, Cys-184/Cys-192, and Cys-291/Cys-323. Glu-154 functions as the Proton donor in the catalytic mechanism.

Belongs to the glycosyl hydrolase 19 family. Chitinase class I subfamily. As to expression, expressed in roots, sheaths and meristems.

The enzyme catalyses Random endo-hydrolysis of N-acetyl-beta-D-glucosaminide (1-&gt;4)-beta-linkages in chitin and chitodextrins.. In terms of biological role, hydrolyzes chitin and plays a role in defense against fungal pathogens containing chitin. Its overexpression confers enhanced resistance to sheath blight pathogen (R.solani). In Oryza sativa subsp. japonica (Rice), this protein is Chitinase 2 (Cht2).